Here is a 305-residue protein sequence, read N- to C-terminus: Methionyl-tRNA formyltransferase (305 aa).

109–112 (SLLP) serves as a coordination point for (6S)-5,6,7,8-tetrahydrofolate.

Belongs to the Fmt family.

The enzyme catalyses L-methionyl-tRNA(fMet) + (6R)-10-formyltetrahydrofolate = N-formyl-L-methionyl-tRNA(fMet) + (6S)-5,6,7,8-tetrahydrofolate + H(+). Attaches a formyl group to the free amino group of methionyl-tRNA(fMet). The formyl group appears to play a dual role in the initiator identity of N-formylmethionyl-tRNA by promoting its recognition by IF2 and preventing the misappropriation of this tRNA by the elongation apparatus. The chain is Methionyl-tRNA formyltransferase from Paramagnetospirillum magneticum (strain ATCC 700264 / AMB-1) (Magnetospirillum magneticum).